The sequence spans 211 residues: Prolactin-3C1 (211 aa).

The signal sequence occupies residues 1–29 (MQLSLTQARTWKGLLLLVSCMILWISVTP). 2 N-linked (GlcNAc...) asparagine glycosylation sites follow: Asn-77 and Asn-173. An intrachain disulfide couples Cys-80 to Cys-187.

It belongs to the somatotropin/prolactin family. Expressed exclusively in decidual tissue.

The protein resides in the secreted. This chain is Prolactin-3C1 (Prl3c1), found in Rattus norvegicus (Rat).